The following is a 503-amino-acid chain: Glutamate--tRNA ligase (503 aa).

Residues 15–25 (PSPTGYLHVGG) carry the 'HIGH' region motif. A 'KMSKS' region motif is present at residues 262 to 266 (KLSKR). K265 lines the ATP pocket.

Belongs to the class-I aminoacyl-tRNA synthetase family. Glutamate--tRNA ligase type 1 subfamily. As to quaternary structure, monomer.

The protein resides in the cytoplasm. It carries out the reaction tRNA(Glu) + L-glutamate + ATP = L-glutamyl-tRNA(Glu) + AMP + diphosphate. Its function is as follows. Catalyzes the attachment of glutamate to tRNA(Glu) in a two-step reaction: glutamate is first activated by ATP to form Glu-AMP and then transferred to the acceptor end of tRNA(Glu). The protein is Glutamate--tRNA ligase of Prosthecochloris aestuarii (strain DSM 271 / SK 413).